Here is a 109-residue protein sequence, read N- to C-terminus: Nucleoid-associated protein MADE_1013280 (109 aa).

Residues Thr86–Phe109 are disordered. The segment covering Pro99–Phe109 has biased composition (pro residues).

Belongs to the YbaB/EbfC family. Homodimer.

It localises to the cytoplasm. The protein localises to the nucleoid. Functionally, binds to DNA and alters its conformation. May be involved in regulation of gene expression, nucleoid organization and DNA protection. This is Nucleoid-associated protein MADE_1013280 from Alteromonas mediterranea (strain DSM 17117 / CIP 110805 / LMG 28347 / Deep ecotype).